The primary structure comprises 21 residues: Trypsin (21 aa).

Residues 1-7 (FPIEEDK) constitute a propeptide, activation peptide. In terms of domain architecture, Peptidase S1 spans 8–21 (IVGGYECPKHXVPW).

It belongs to the peptidase S1 family.

The protein localises to the secreted. It localises to the extracellular space. It carries out the reaction Preferential cleavage: Arg-|-Xaa, Lys-|-Xaa.. The sequence is that of Trypsin from Protopterus aethiopicus (Marbled lungfish).